Here is a 353-residue protein sequence, read N- to C-terminus: Histidinol-phosphate aminotransferase (353 aa).

Residue Lys-214 is modified to N6-(pyridoxal phosphate)lysine.

This sequence belongs to the class-II pyridoxal-phosphate-dependent aminotransferase family. Histidinol-phosphate aminotransferase subfamily. Homodimer. It depends on pyridoxal 5'-phosphate as a cofactor.

It catalyses the reaction L-histidinol phosphate + 2-oxoglutarate = 3-(imidazol-4-yl)-2-oxopropyl phosphate + L-glutamate. Its pathway is amino-acid biosynthesis; L-histidine biosynthesis; L-histidine from 5-phospho-alpha-D-ribose 1-diphosphate: step 7/9. The sequence is that of Histidinol-phosphate aminotransferase from Gloeobacter violaceus (strain ATCC 29082 / PCC 7421).